A 308-amino-acid chain; its full sequence is Porphobilinogen deaminase (308 aa).

Cysteine 241 is subject to S-(dipyrrolylmethanemethyl)cysteine.

The protein belongs to the HMBS family. Monomer. Requires dipyrromethane as cofactor.

The catalysed reaction is 4 porphobilinogen + H2O = hydroxymethylbilane + 4 NH4(+). It participates in porphyrin-containing compound metabolism; protoporphyrin-IX biosynthesis; coproporphyrinogen-III from 5-aminolevulinate: step 2/4. Tetrapolymerization of the monopyrrole PBG into the hydroxymethylbilane pre-uroporphyrinogen in several discrete steps. In Staphylococcus epidermidis (strain ATCC 35984 / DSM 28319 / BCRC 17069 / CCUG 31568 / BM 3577 / RP62A), this protein is Porphobilinogen deaminase.